The chain runs to 580 residues: Transcription factor coe2-B (580 aa).

The tract at residues 60–63 (RKSN) is interaction with DNA. The segment at 148-167 (CRVLLTHEVMCSRCCEKKSC) adopts a C5-type zinc-finger fold. Interaction with DNA stretches follow at residues 194–201 (NCLKTAGN) and 233–236 (NNSK). The 83-residue stretch at 259 to 341 (PCIKAISPSE…CKGAPGRFIY (83 aa)) folds into the IPT/TIG domain. The segment at 455 to 492 (IRNTSSISPRGYSSSSTPQQSNYSTPSNSMNGYSNVPM) is disordered. A compositionally biased stretch (low complexity) spans 459-481 (SSISPRGYSSSSTPQQSNYSTPS). Positions 482-492 (NSMNGYSNVPM) are enriched in polar residues.

Belongs to the COE family. As to expression, in embryos, expressed in precursors of primary neurons. In adults, expressed at high levels in the brain, and at low levels in the somatic muscles, testis, and possibly the spleen.

It localises to the nucleus. In terms of biological role, may play a pivotal role in the transcriptional cascade that specifies primary neurons in embryos. Stabilizes the higher neural potential of selected progenitor cells that express neurog2/X-ngnr-1 by maintaining Delta-Notch signaling. Thus ensures the transition between neural competence and irreversible commitment to a neural fate. Also promotes neuronal differentiation by activating neurod1 expression, directly or indirectly. This is Transcription factor coe2-B from Xenopus laevis (African clawed frog).